Consider the following 525-residue polypeptide: Exoglucanase 1 (525 aa).

An N-terminal signal peptide occupies residues Met1–Ala18. The segment at Gln19 to Asn467 is catalytic. Residue Glu231 is the Nucleophile of the active site. Residue Glu236 is the Proton donor of the active site. An N-linked (GlcNAc...) asparagine glycan is attached at Asn289. Residues Gly454 to Gly492 form a disordered region. A compositionally biased stretch (gly residues) spans Pro456–Gly465. A linker region spans residues Pro468–Pro489. Positions Thr473–Pro489 are enriched in low complexity. The CBM1 domain occupies Pro489 to Leu525. 2 cysteine pairs are disulfide-bonded: Cys497-Cys514 and Cys508-Cys524.

It belongs to the glycosyl hydrolase 7 (cellulase C) family.

It catalyses the reaction Hydrolysis of (1-&gt;4)-beta-D-glucosidic linkages in cellulose and cellotetraose, releasing cellobiose from the non-reducing ends of the chains.. Its function is as follows. The biological conversion of cellulose to glucose generally requires three types of hydrolytic enzymes: (1) Endoglucanases which cut internal beta-1,4-glucosidic bonds; (2) Exocellobiohydrolases that cut the disaccharide cellobiose from the non-reducing end of the cellulose polymer chain; (3) Beta-1,4-glucosidases which hydrolyze the cellobiose and other short cello-oligosaccharides to glucose. This is Exoglucanase 1 (CBH-1) from Humicola insolens (Soft-rot fungus).